Reading from the N-terminus, the 328-residue chain is uncharacterized protein (328 aa).

In terms of domain architecture, SIS spans Leu37–Ile179. Gly52–Gly57 is an ATP binding site. CBS domains follow at residues Leu205 to Ile264 and Met273 to Leu328.

Belongs to the SIS family. GutQ/KpsF subfamily.

This is an uncharacterized protein from Chlamydia muridarum (strain MoPn / Nigg).